We begin with the raw amino-acid sequence, 448 residues long: Argininosuccinate synthase (448 aa).

Residues 17 to 25 (AFSGGLDTS) and Ala43 each bind ATP. L-citrulline is bound at residue Tyr99. The ATP site is built by Gly129 and Thr131. Thr131, Asn135, and Asp136 together coordinate L-aspartate. An L-citrulline-binding site is contributed by Asn135. Asp136 lines the ATP pocket. The L-citrulline site is built by Arg139 and Ser192. Asp194 contributes to the ATP binding site. Positions 201, 203, and 280 each coordinate L-citrulline.

Belongs to the argininosuccinate synthase family. Type 2 subfamily. As to quaternary structure, homotetramer.

The protein resides in the cytoplasm. It carries out the reaction L-citrulline + L-aspartate + ATP = 2-(N(omega)-L-arginino)succinate + AMP + diphosphate + H(+). The protein operates within amino-acid biosynthesis; L-arginine biosynthesis; L-arginine from L-ornithine and carbamoyl phosphate: step 2/3. This is Argininosuccinate synthase from Acidovorax ebreus (strain TPSY) (Diaphorobacter sp. (strain TPSY)).